The sequence spans 283 residues: Protein FAM170B (283 aa).

A compositionally biased stretch (basic and acidic residues) spans methionine 1–glutamate 11. Disordered stretches follow at residues methionine 1–glycine 58 and alanine 246–glutamine 283.

This sequence belongs to the FAM170 family. In terms of assembly, interacts with GOPC. In terms of tissue distribution, exclusively expressed in adult testis.

It localises to the cytoplasmic vesicle. It is found in the secretory vesicle. Its subcellular location is the acrosome. The protein resides in the acrosome outer membrane. Its function is as follows. Plays a role in fertilization through the acrosome reaction. The polypeptide is Protein FAM170B (Homo sapiens (Human)).